We begin with the raw amino-acid sequence, 312 residues long: Taste receptor type 2 member 135 (312 aa).

Residues 1–19 (MSTGHTVLGCQTTDKTVVT) are Extracellular-facing. A helical transmembrane segment spans residues 20–40 (LFIILVLLCLVAVVGNGFIII). Topologically, residues 41-66 (ALGMKWLLRRTLSAHNKLLISLAASR) are cytoplasmic. A helical transmembrane segment spans residues 67–87 (FCLQCVVIGKNIYVFLNPTSF). The Extracellular segment spans residues 88–97 (PYNPVIQLLN). Residues 98–118 (LMWDFLTAATIWLCSLLGFFY) form a helical membrane-spanning segment. Topologically, residues 119-140 (CVKIATLTHPVFVWLKYRLPGW) are cytoplasmic. A helical membrane pass occupies residues 141–161 (VPWMLLSAVGMSSLTSILCFI). Residues 162–198 (GNYMIYQNHAKSGHQPWNVTGNSLRHSLEKFYFFSIK) lie on the Extracellular side of the membrane. N-linked (GlcNAc...) asparagine glycosylation is present at Asn179. A helical transmembrane segment spans residues 199-219 (IIMWTIPTVVFSIFMSLLLVS). Topologically, residues 220–244 (LVRHMKKTFLALSELRDVWAQAHFK) are cytoplasmic. The helical transmembrane segment at 245–265 (ALLPLLSFIVLFISCFLTLVL) threads the bilayer. Residues 266–277 (SSASNTPYQEFR) lie on the Extracellular side of the membrane. Residues 278–298 (YWMWQVVIHLCTVIHPIVILF) traverse the membrane as a helical segment. Residues 299–312 (SNPVLRVVIKRGCC) are Cytoplasmic-facing.

This sequence belongs to the G-protein coupled receptor T2R family.

The protein resides in the membrane. Putative taste receptor which may play a role in the perception of bitterness. This is Taste receptor type 2 member 135 (Tas2r135) from Mus musculus (Mouse).